Reading from the N-terminus, the 154-residue chain is Ribosomal RNA-processing protein 14-N (154 aa).

Residues 36-154 (WKQKKSTLEE…KHKASPRAGF (119 aa)) form a disordered region. Serine 80 is modified (phosphoserine). The residue at position 83 (threonine 83) is a Phosphothreonine. Positions 105–133 (QDLREKRKAGDLNQKRQNKRPVENEKDSQ) are enriched in basic and acidic residues. Residues 140 to 154 (KVQKKKHKASPRAGF) are compositionally biased toward basic residues.

Belongs to the SURF6 family.

Its subcellular location is the nucleus. It localises to the nucleolus. In terms of biological role, involved in ribosome biogenesis and cell polarity. Required for the synthesis of both 40S and 60S ribosomal subunits and may also play some direct role in correct positioning of the mitotic spindle during mitosis. The polypeptide is Ribosomal RNA-processing protein 14-N (rrp14n) (Schizosaccharomyces pombe (strain 972 / ATCC 24843) (Fission yeast)).